The chain runs to 1338 residues: Fanconi anemia group I protein (1338 aa).

A Glycyl lysine isopeptide (Lys-Gly) (interchain with G-Cter in ubiquitin) cross-link involves residue Lys525. Residues Ser558 and Ser561 each carry the phosphoserine modification. Position 567 is a phosphothreonine (Thr567).

The protein belongs to the Fanconi anemia group I protein family. In terms of assembly, homodimer. Part of a FANCI-FANCD2 heterodimeric complex that binds and scans dsDNA for DNA damage. Interacts with FANCL. Interacts with MTMR15/FAN1. Interacts with POLN. Interacts with UBL5; the interaction promotes FANCI homodimerization. In terms of processing, monoubiquitinated by FANCL during S phase and upon genotoxic stress. Deubiquitinated by USP1 as cells enter G2/M, or once DNA repair is completed. Monoubiquitination requires the FANCA-FANCB-FANCC-FANCE-FANCF-FANCG-FANCM complex. Ubiquitination is required for binding to chromatin, DNA repair, and normal cell cycle progression. Monoubiquitination is stimulated by DNA-binding. Phosphorylated in response to DNA damage by ATM and/or ATR. Phosphorylation of FANCI promotes ubiquitination of FANCD2, which prevents DNA release from the FANCI-FANCD2 complex.

Plays an essential role in the repair of DNA double-strand breaks by homologous recombination and in the repair of interstrand DNA cross-links (ICLs) by promoting FANCD2 monoubiquitination by FANCL and participating in recruitment to DNA repair sites. The FANCI-FANCD2 complex binds and scans double-stranded DNA (dsDNA) for DNA damage; this complex stalls at DNA junctions between double-stranded DNA and single-stranded DNA. Participates in S phase and G2 phase checkpoint activation upon DNA damage. This chain is Fanconi anemia group I protein, found in Gallus gallus (Chicken).